The sequence spans 396 residues: Obg-like ATPase 1 (396 aa).

The 261-residue stretch at 23-283 (LKIGIVGLPN…LSAEERQKYL (261 aa)) folds into the OBG-type G domain. 32 to 37 (NVGKST) serves as a coordination point for ATP. Mg(2+)-binding residues include serine 36 and threonine 56. An ATP-binding site is contributed by leucine 231. Positions 267–274 (LELKLQEL) match the Nuclear export signal motif. An N6-acetyllysine modification is found at lysine 294. The TGS domain maps to 304–387 (QLEYFFTAGP…EDGDIIFFKF (84 aa)).

This sequence belongs to the TRAFAC class OBG-HflX-like GTPase superfamily. OBG GTPase family. YchF/OLA1 subfamily. As to quaternary structure, monomer. The cofactor is Mg(2+). As to expression, expressed in all tissues tested but its expression is more abundant in testis, liver, lung, and brain. Overexpressed in several malignancies, including cancers of the colon, rectum, ovary, lung, stomach, and uterus.

Its subcellular location is the cytoplasm. The protein localises to the nucleus. It is found in the nucleolus. Its function is as follows. Hydrolyzes ATP, and can also hydrolyze GTP with lower efficiency. Has lower affinity for GTP. This Homo sapiens (Human) protein is Obg-like ATPase 1.